Reading from the N-terminus, the 143-residue chain is Large ribosomal subunit protein uL15 (143 aa).

Basic residues-rich tracts occupy residues 1–13 and 23–38; these read MIRKSKKITKMRG and KKHRGAGHRGGRGNAG. Positions 1–38 are disordered; that stretch reads MIRKSKKITKMRGSRTCGYGEAKKHRGAGHRGGRGNAG.

Belongs to the universal ribosomal protein uL15 family. In terms of assembly, part of the 50S ribosomal subunit.

Functionally, binds to the 23S rRNA. The protein is Large ribosomal subunit protein uL15 of Methanococcus maripaludis (strain C6 / ATCC BAA-1332).